The following is a 61-amino-acid chain: Metallothionein-2 (61 aa).

Met-1 is subject to N-acetylmethionine. The segment at 1–29 (MDPNCSCASDGSCSCAGACKCKQCKCTSC) is beta. A divalent metal cation contacts are provided by Cys-5, Cys-7, Cys-13, Cys-15, Cys-19, Cys-21, Cys-24, Cys-26, Cys-29, Cys-33, Cys-34, Cys-36, Cys-37, Cys-41, Cys-44, Cys-48, Cys-50, and Cys-57. The segment at 30 to 61 (KKSCCSCCPVGCAKCSQGCICKEASDKCSCCA) is alpha. A Phosphoserine modification is found at Ser-58. The a divalent metal cation site is built by Cys-59 and Cys-60.

Belongs to the metallothionein superfamily. Type 1 family.

In terms of biological role, metallothioneins have a high content of cysteine residues that bind various heavy metals; these proteins are transcriptionally regulated by both heavy metals and glucocorticoids. The polypeptide is Metallothionein-2 (Mt2) (Mus musculus (Mouse)).